We begin with the raw amino-acid sequence, 20 residues long: M-poneritoxin-Ng1f (20 aa).

Lysine 20 carries the lysine amide modification.

As to expression, expressed by the venom gland.

Its subcellular location is the secreted. The protein resides in the target cell membrane. Has activity against Gram-positive bacteria. Has insecticidal and hemolytic activities. May act by disrupting the integrity of the bacterial cell membrane. This Neoponera goeldii (Ponerine ant) protein is M-poneritoxin-Ng1f.